The sequence spans 663 residues: Fructose-1,6-bisphosphatase class 3 1 (663 aa).

Belongs to the FBPase class 3 family. Mn(2+) serves as cofactor.

The catalysed reaction is beta-D-fructose 1,6-bisphosphate + H2O = beta-D-fructose 6-phosphate + phosphate. It participates in carbohydrate biosynthesis; gluconeogenesis. This Clostridium beijerinckii (strain ATCC 51743 / NCIMB 8052) (Clostridium acetobutylicum) protein is Fructose-1,6-bisphosphatase class 3 1.